The sequence spans 325 residues: Transaldolase (325 aa).

K125 functions as the Schiff-base intermediate with substrate in the catalytic mechanism.

This sequence belongs to the transaldolase family. Type 2 subfamily.

The protein localises to the cytoplasm. The catalysed reaction is D-sedoheptulose 7-phosphate + D-glyceraldehyde 3-phosphate = D-erythrose 4-phosphate + beta-D-fructose 6-phosphate. Its pathway is carbohydrate degradation; pentose phosphate pathway; D-glyceraldehyde 3-phosphate and beta-D-fructose 6-phosphate from D-ribose 5-phosphate and D-xylulose 5-phosphate (non-oxidative stage): step 2/3. In terms of biological role, transaldolase is important for the balance of metabolites in the pentose-phosphate pathway. The sequence is that of Transaldolase from Campylobacter jejuni subsp. doylei (strain ATCC BAA-1458 / RM4099 / 269.97).